The following is a 454-amino-acid chain: Venom prothrombin activator porpharin-D (454 aa).

An N-terminal signal peptide occupies residues 1–20 (MAPQLLLCLILTFLWSLPEA). Positions 21–40 (ESNVFLKSKEANRFLQRTKR) are excised as a propeptide. One can recognise a Gla domain in the interval 41–86 (SNSLFEEFRPGNIERECIEEKCSKEEAREIFKDNEKTEAFWNVYVD). A 4-carboxyglutamate mark is found at E46, E47, E54, E56, E59, E60, E65, E66, E69, and E75. C57 and C62 form a disulfide bridge. Positions 86 to 122 (DGDQCSSNPCHYGGTCKDGIGSYTCTCLPNYEGKNCE) constitute an EGF-like 1; calcium-binding domain. Cystine bridges form between C90-C101, C95-C110, C112-C121, C129-C140, C136-C149, C151-C164, C172-C316, C216-C221, C236-C252, C364-C378, and C389-C417. S92 carries O-linked (Hex...) serine glycosylation. One can recognise an EGF-like 2 domain in the interval 129-164 (CRFFNGNCWHFCKPVQNDTQCSCAESYRLGDDGHSC). Positions 182–209 (REASLPDFVQSQNATLLKKSDNPSPDIR) are cleaved as a propeptide — activation peptide. Residues 210–441 (IINGMDCKLG…FIPWIKAVMR (232 aa)) enclose the Peptidase S1 domain. Catalysis depends on charge relay system residues H251 and D296. The Charge relay system role is filled by S393.

It belongs to the peptidase S1 family. Snake venom subfamily. In terms of assembly, heterodimer of a light chain and a heavy chain; disulfide-linked. The vitamin K-dependent, enzymatic carboxylation of some glutamate residues allows the modified protein to bind calcium. As to expression, expressed by the venom gland.

The protein localises to the secreted. It carries out the reaction Selective cleavage of Arg-|-Thr and then Arg-|-Ile bonds in prothrombin to form thrombin.. Snake prothrombin activator that attacks the hemostatic system of prey. This protein is functionally similar to blood coagulation factor Xa. The chain is Venom prothrombin activator porpharin-D from Pseudechis porphyriacus (Red-bellied black snake).